The chain runs to 309 residues: Pantoate--beta-alanine ligase (309 aa).

This sequence belongs to the pantothenate synthetase family.

Its subcellular location is the cytoplasm. It localises to the nucleus. It carries out the reaction (R)-pantoate + beta-alanine + ATP = (R)-pantothenate + AMP + diphosphate + H(+). Its pathway is cofactor biosynthesis; (R)-pantothenate biosynthesis; (R)-pantothenate from (R)-pantoate and beta-alanine: step 1/1. Its function is as follows. Required for pantothenic acid biosynthesis. The chain is Pantoate--beta-alanine ligase (PAN6) from Saccharomyces cerevisiae (strain ATCC 204508 / S288c) (Baker's yeast).